We begin with the raw amino-acid sequence, 80 residues long: Cortexin-3 (80 aa).

The chain crosses the membrane as a helical span at residues 28-48 (TTFVFVILLFIFLGILIVRCF).

The protein belongs to the cortexin family.

It localises to the membrane. The polypeptide is Cortexin-3 (Ctxn3) (Mus musculus (Mouse)).